Reading from the N-terminus, the 607-residue chain is CUB and zona pellucida-like domain-containing protein 1 (607 aa).

Positions 1-19 are cleaved as a signal peptide; sequence MEVTGRLFIWAILAVSCGA. Cys17 and Cys58 are joined by a disulfide. CUB domains follow at residues 20 to 146 and 154 to 265; these read QLNS…YFFS and CGGD…YTSI. The Lumenal portion of the chain corresponds to 20 to 568; the sequence is QLNSTEAEGK…AEISNQPLSR (549 aa). N-linked (GlcNAc...) asparagine glycosylation is found at Asn22, Asn57, and Asn67. Cystine bridges form between Cys85/Cys107, Cys154/Cys180, and Cys207/Cys229. Residues 276–519 enclose the ZP domain; that stretch reads SCVSDKMRVI…SRCNQGCVPR (244 aa). An N-linked (GlcNAc...) asparagine glycan is attached at Asn419. A disulfide bridge connects residues Cys442 and Cys498. A helical transmembrane segment spans residues 569-589; it reads LYLFSFMVLALNVVIVAITTV. At 590-607 the chain is on the cytoplasmic side; sequence KHFLNRWMDHRYQKLQVY.

In terms of tissue distribution, highly expressed in pancreatic acinar cells. Also expressed in epithelium of the uterus during late pregnancy but not detected in non-pregnant uterus or in a variety of other adult and fetal tissues.

Its subcellular location is the zymogen granule membrane. Localized to zymogen granules, where it functions in trypsinogen activation. May indirectly regulate cell motility, cell-cell and cell/extracellular matrix interactions. The protein is CUB and zona pellucida-like domain-containing protein 1 of Mus musculus (Mouse).